The primary structure comprises 550 residues: Arginine--tRNA ligase (550 aa).

The 'HIGH' region motif lies at 124–134; that stretch reads ANPTGPLHVGH.

Belongs to the class-I aminoacyl-tRNA synthetase family. In terms of assembly, monomer.

The protein localises to the cytoplasm. The catalysed reaction is tRNA(Arg) + L-arginine + ATP = L-arginyl-tRNA(Arg) + AMP + diphosphate. In Desulfovibrio desulfuricans (strain ATCC 27774 / DSM 6949 / MB), this protein is Arginine--tRNA ligase.